We begin with the raw amino-acid sequence, 59 residues long: Large ribosomal subunit protein uL30 (59 aa).

This sequence belongs to the universal ribosomal protein uL30 family. In terms of assembly, part of the 50S ribosomal subunit.

This is Large ribosomal subunit protein uL30 from Aeromonas hydrophila subsp. hydrophila (strain ATCC 7966 / DSM 30187 / BCRC 13018 / CCUG 14551 / JCM 1027 / KCTC 2358 / NCIMB 9240 / NCTC 8049).